The chain runs to 209 residues: Methylated-DNA--protein-cysteine methyltransferase (209 aa).

Zn(2+) is bound at residue C5. S14 is subject to Phosphoserine. Zn(2+)-binding residues include C24 and H29. The segment at 35-57 is disordered; it reads SGKTPSSDPKEAPASPELLGGPE. Zn(2+) is bound at residue H89. Residues T99, Y118, Q119, N127, and R132 each contribute to the DNA site. Residue C149 is the Nucleophile; methyl group acceptor of the active site. DNA is bound at residue S155. S205 is subject to Phosphoserine.

The protein belongs to the MGMT family. It depends on Zn(2+) as a cofactor.

The protein resides in the nucleus. It carries out the reaction a 6-O-methyl-2'-deoxyguanosine in DNA + L-cysteinyl-[protein] = S-methyl-L-cysteinyl-[protein] + a 2'-deoxyguanosine in DNA. It catalyses the reaction a 4-O-methyl-thymidine in DNA + L-cysteinyl-[protein] = a thymidine in DNA + S-methyl-L-cysteinyl-[protein]. In terms of biological role, involved in the cellular defense against the biological effects of O6-methylguanine (O6-MeG) and O4-methylthymine (O4-MeT) in DNA. Repairs the methylated nucleobase in DNA by stoichiometrically transferring the methyl group to a cysteine residue in the enzyme. This is a suicide reaction: the enzyme is irreversibly inactivated. In Cricetulus griseus (Chinese hamster), this protein is Methylated-DNA--protein-cysteine methyltransferase (MGMT).